Reading from the N-terminus, the 3619-residue chain is BEACH domain-containing protein lvsA (3619 aa).

Disordered stretches follow at residues Met1–Asn117, Lys648–Ala709, Asn1101–Gln1129, Ser1367–Lys1390, Ile1636–Ile1658, Ser1893–Gly1924, and Gln1964–Asn1999. Residues Pro17–Pro30 are compositionally biased toward pro residues. Composition is skewed to low complexity over residues Pro31–Gln59, Ser68–Ser87, Glu97–Asn117, Asn656–Asn689, Asn1101–Asn1127, Asn1375–Asn1387, Ser1640–Ser1652, and Ser1893–Ser1923. One copy of the WD 1 repeat lies at Ser94–Met133. The segment covering Met1974 to Leu1986 has biased composition (polar residues). Residues Val2234–Leu2258 are a coiled coil. The stretch at Leu2294–Ser2335 is one WD 2 repeat. Disordered regions lie at residues Lys2403 to Lys2457 and Asn2596 to Glu2785. Basic and acidic residues predominate over residues Asp2440–Lys2452. A compositionally biased stretch (low complexity) spans Asn2596–Gln2662. Composition is skewed to polar residues over residues Ile2663–Glu2687 and Lys2694–Asn2725. Composition is skewed to low complexity over residues Ser2726 to Leu2735 and Thr2742 to Thr2764. The 126-residue stretch at Lys2807 to Val2932 folds into the BEACH-type PH domain. The tract at residues Thr2940–Arg2971 is disordered. Gly residues predominate over residues Asp2944 to Thr2953. The segment covering Asp2959–Arg2971 has biased composition (basic and acidic residues). Residues Asp2972–Arg3270 enclose the BEACH domain. WD repeat units lie at residues His3347–Arg3386, Gly3389–Ser3428, Ala3431–Thr3471, Ile3474–Asn3518, and Ser3563–Gln3602. Residues Pro3516 to Pro3539 are disordered. The span at Asn3518–Asn3534 shows a compositional bias: low complexity.

It is found in the contractile vacuole membrane. In terms of biological role, involved in myosin-independent cytokinesis and early steps of phagocytosis. Also involved in contractile vacuole-mediated osmoregulation. The chain is BEACH domain-containing protein lvsA (lvsA) from Dictyostelium discoideum (Social amoeba).